Reading from the N-terminus, the 301-residue chain is Probable deoxyhypusine synthase 1 (301 aa).

Lys-269 acts as the Nucleophile in catalysis.

It belongs to the deoxyhypusine synthase family. Requires NAD(+) as cofactor.

The enzyme catalyses [eIF5A protein]-L-lysine + spermidine = [eIF5A protein]-deoxyhypusine + propane-1,3-diamine. The protein operates within protein modification; eIF5A hypusination. Its function is as follows. Catalyzes the NAD-dependent oxidative cleavage of spermidine and the subsequent transfer of the butylamine moiety of spermidine to the epsilon-amino group of a specific lysine residue of the eIF-5A precursor protein to form the intermediate deoxyhypusine residue. The protein is Probable deoxyhypusine synthase 1 (dys1) of Archaeoglobus fulgidus (strain ATCC 49558 / DSM 4304 / JCM 9628 / NBRC 100126 / VC-16).